Here is a 377-residue protein sequence, read N- to C-terminus: RNA polymerase sigma factor SigA (377 aa).

Residues 72–92 form a disordered region; that stretch reads EVSNLRQGEDHDGNDNDDFNF. The interval 144–214 is sigma-70 factor domain-2; the sequence is LAEANLRLVV…TRAIADQART (71 aa). The Interaction with polymerase core subunit RpoC motif lies at 168-171; sequence DLIQ. The tract at residues 223–299 is sigma-70 factor domain-3; sequence ETINKLIRVS…DQEALTPADA (77 aa). The interval 312–365 is sigma-70 factor domain-4; the sequence is VLDTLTEREENVLRLRFGLDDGRTRTLEEVGKVFGVTRERIRQIEAKALRKLRH. Residues 338 to 357 constitute a DNA-binding region (H-T-H motif); it reads LEEVGKVFGVTRERIRQIEA.

The protein belongs to the sigma-70 factor family. RpoD/SigA subfamily. Interacts transiently with the RNA polymerase catalytic core.

The protein resides in the cytoplasm. Its function is as follows. Sigma factors are initiation factors that promote the attachment of RNA polymerase to specific initiation sites and are then released. This sigma factor is the primary sigma factor during exponential growth. This Bacillus sp protein is RNA polymerase sigma factor SigA.